The sequence spans 566 residues: Rho GTPase-activating protein gacH (566 aa).

Disordered regions lie at residues 1–56, 65–84, 128–168, and 322–366; these read MSGV…SGAT, LLKQQQQPNHSITTNNNNNK, SEDE…SAHS, and KPQV…NSKN. Over residues 14–35 the composition is skewed to low complexity; sequence SSTTATTTGSSKSSLNISKSVS. Residues 36–56 show a composition bias toward polar residues; that stretch reads PTGNKAVSPMSSPNSLQSGAT. Residues 65-83 are compositionally biased toward low complexity; it reads LLKQQQQPNHSITTNNNNN. Acidic residues predominate over residues 130–141; that stretch reads DEYEDDEDEDEN. Over residues 142 to 160 the composition is skewed to low complexity; sequence NNSVNNNSNNNSNNNNNNN. The span at 327–337 shows a compositional bias: polar residues; that stretch reads KSPQSSGSLST. The segment covering 345 to 356 has biased composition (low complexity); that stretch reads SSSLQRSRSVSQ. Positions 369–564 constitute a Rho-GAP domain; sequence GSLDTILEKE…LLIENYNLFY (196 aa).

Its subcellular location is the cytoplasm. Rho GTPase-activating protein involved in the signal transduction pathway. The sequence is that of Rho GTPase-activating protein gacH (gacH) from Dictyostelium discoideum (Social amoeba).